The sequence spans 524 residues: Lysophospholipid acyltransferase LPCAT4 (524 aa).

2 helical membrane-spanning segments follow: residues 40–62 (CLLG…FLLW) and 87–107 (TVCH…LGFL). An HXXXXD motif motif is present at residues 129 to 134 (HSTFFD). An N-linked (GlcNAc...) asparagine glycan is attached at Asn-152. Residues 489-524 (PPHTSRGTSQTPNASSPGNPTALANGTVQAPKQKGD) form a disordered region. The segment covering 493-518 (SRGTSQTPNASSPGNPTALANGTVQA) has biased composition (polar residues).

Belongs to the 1-acyl-sn-glycerol-3-phosphate acyltransferase family. Widely expressed with predominant level in brain.

The protein resides in the endoplasmic reticulum membrane. The enzyme catalyses a 1-acyl-sn-glycero-3-phosphoethanolamine + an acyl-CoA = a 1,2-diacyl-sn-glycero-3-phosphoethanolamine + CoA. It carries out the reaction a 1-O-(1Z-alkenyl)-sn-glycero-3-phosphoethanolamine + an acyl-CoA = a 1-O-(1Z-alkenyl)-2-acyl-sn-glycero-3-phosphoethanolamine + CoA. It catalyses the reaction a 1-acyl-sn-glycero-3-phosphocholine + an acyl-CoA = a 1,2-diacyl-sn-glycero-3-phosphocholine + CoA. The catalysed reaction is a 1-O-alkyl-sn-glycero-3-phosphocholine + acetyl-CoA = a 1-O-alkyl-2-acetyl-sn-glycero-3-phosphocholine + CoA. The enzyme catalyses a 1-acyl-sn-glycero-3-phospho-L-serine + an acyl-CoA = a 1,2-diacyl-sn-glycero-3-phospho-L-serine + CoA. It carries out the reaction octanoyl-CoA + a 1-acyl-sn-glycero-3-phosphoethanolamine = 1-acyl-2-octanoyl-sn-glycero-3-phosphoethanolamine + CoA. It catalyses the reaction a 1-acyl-sn-glycero-3-phosphoethanolamine + hexadecanoyl-CoA = 1-acyl-2-hexadecanoyl-sn-glycero-3-phosphoethanolamine + CoA. The catalysed reaction is a 1-acyl-sn-glycero-3-phosphoethanolamine + octadecanoyl-CoA = 1-acyl-2-octadecanoyl-sn-glycero-3-phosphoethanolamine + CoA. The enzyme catalyses a 1-acyl-sn-glycero-3-phosphoethanolamine + (9Z)-octadecenoyl-CoA = 1-acyl-2-(9Z)-octadecenoyl-sn-glycero-3-phosphoethanolamine + CoA. It carries out the reaction a 1-acyl-sn-glycero-3-phosphoethanolamine + (5Z,8Z,11Z,14Z)-eicosatetraenoyl-CoA = 1-acyl-2-(5Z,8Z,11Z,14Z)-eicosatetraenoyl-sn-glycero-3-phosphoethanolamine + CoA. It catalyses the reaction a 1-O-(1Z-alkenyl)-sn-glycero-3-phosphoethanolamine + octanoyl-CoA = 1-O-(1Z)-alkenyl-2-octanoyl-sn-glycero-3-phosphoethanolamine + CoA. The catalysed reaction is a 1-O-(1Z-alkenyl)-sn-glycero-3-phosphoethanolamine + hexadecanoyl-CoA = 1-O-(1Z)-alkenyl-2-hexadecanoyl-sn-glycero-3-phosphoethanolamine + CoA. The enzyme catalyses a 1-O-(1Z-alkenyl)-sn-glycero-3-phosphoethanolamine + octadecanoyl-CoA = 1-O-(1Z)-alkenyl-2-octadecanoyl-sn-glycero-3-phosphoethanolamine + CoA. It carries out the reaction a 1-O-(1Z-alkenyl)-sn-glycero-3-phosphoethanolamine + (9Z)-octadecenoyl-CoA = 1-O-(1Z)-alkenyl-2-(9Z)-octadecenoyl-sn-glycero-3-phosphoethanolamine + CoA. It catalyses the reaction a 1-O-(1Z-alkenyl)-sn-glycero-3-phosphoethanolamine + (5Z,8Z,11Z,14Z)-eicosatetraenoyl-CoA = 1-O-(1Z)-alkenyl-2-(5Z,8Z,11Z,14Z)-eicosatetraenoyl-sn-glycero-3-phosphoethanolamine + CoA. The catalysed reaction is a 1-acyl-sn-glycero-3-phosphocholine + hexadecanoyl-CoA = 1-acyl-2-hexadecanoyl-sn-glycero-3-phosphocholine + CoA. The enzyme catalyses a 1-acyl-sn-glycero-3-phosphocholine + (9Z)-octadecenoyl-CoA = a 1-acyl-2-(9Z)-octadecenoyl-sn-glycero-3-phosphocholine + CoA. It carries out the reaction 1-O-hexadecyl-sn-glycero-3-phosphocholine + (9Z)-octadecenoyl-CoA = 1-O-hexadecyl-2-(9Z)-octadecenoyl-sn-glycero-3-phosphocholine + CoA. It catalyses the reaction 1-O-hexadecyl-sn-glycero-3-phosphocholine + (5Z,8Z,11Z,14Z)-eicosatetraenoyl-CoA = 1-O-hexadecyl-2-(5Z,8Z,11Z,14Z)-eicosatetraenoyl-sn-glycero-3-phosphocholine + CoA. The catalysed reaction is 1-hexadecanoyl-sn-glycero-3-phospho-L-serine + (9Z)-octadecenoyl-CoA = 1-hexadecanoyl-2-(9Z-octadecenoyl)-sn-glycero-3-phospho-L-serine + CoA. The enzyme catalyses 1-octadecanoyl-sn-glycero-3-phospho-(1'-sn-glycerol) + (9Z)-octadecenoyl-CoA = 1-octadecanoyl-2-(9Z-octadecenoyl)-sn-glycero-3-phospho-(1'-sn-glycerol) + CoA. It carries out the reaction 1-octadecanoyl-sn-glycero-3-phospho-(1'-sn-glycerol) + (5Z,8Z,11Z,14Z)-eicosatetraenoyl-CoA = 1-octadecanoyl-2-(5Z,8Z,11Z,14Z-eicosatetraenoyl)-sn-glycero-3-phospho-(1'-sn-glycerol) + CoA. The protein operates within lipid metabolism; phospholipid metabolism. Displays acyl-CoA-dependent lysophospholipid acyltransferase activity with a subset of lysophospholipids as substrates; converts lysophosphatidylethanolamine to phosphatidylethanolamine, lysophosphatidylcholine to phosphatidycholine, 1-alkenyl-lysophatidylethanolamine to 1-alkenyl-phosphatidylethanolamine, lysophosphatidylglycerol and alkyl-lysophosphatidylcholine to phosphatidylglycerol and alkyl-phosphatidylcholine, respectively. In contrast, has no lysophosphatidylinositol, glycerol-3-phosphate, diacylglycerol or lysophosphatidic acid acyltransferase activity. Prefers long chain acyl-CoAs (C16, C18) as acyl donors. This Homo sapiens (Human) protein is Lysophospholipid acyltransferase LPCAT4 (LPCAT4).